The following is a 165-amino-acid chain: Large ribosomal subunit protein uL10 (165 aa).

Belongs to the universal ribosomal protein uL10 family. In terms of assembly, part of the ribosomal stalk of the 50S ribosomal subunit. The N-terminus interacts with L11 and the large rRNA to form the base of the stalk. The C-terminus forms an elongated spine to which L12 dimers bind in a sequential fashion forming a multimeric L10(L12)X complex.

Forms part of the ribosomal stalk, playing a central role in the interaction of the ribosome with GTP-bound translation factors. This Sodalis glossinidius (strain morsitans) protein is Large ribosomal subunit protein uL10.